The following is a 248-amino-acid chain: CKLF-like MARVEL transmembrane domain-containing protein 2 (248 aa).

Residues 1 to 63 are disordered; sequence MAPKAAKGAK…KAVQPKHEVG (63 aa). The segment covering 12–22 has biased composition (pro residues); that stretch reads EPAPAPPPPGA. A compositionally biased stretch (basic and acidic residues) spans 23–63; that stretch reads KPEEDKKDGKEPSDKPQKAVQDHKEPSDKPQKAVQPKHEVG. The MARVEL domain maps to 82–204; sequence FWLLGHAEIK…DVCLQRNHFR (123 aa). The next 3 membrane-spanning stretches (helical) occupy residues 116-136, 147-167, and 178-198; these read LIIT…SFAI, ISDL…VVFA, and YLLA…DVCL. Residues 208–248 form a disordered region; the sequence is AKKHMLVPPPGKEKGPQQGKGPEPAKPPEPGKPPGPAKGKK. Positions 231 to 248 are enriched in pro residues; that stretch reads PAKPPEPGKPPGPAKGKK.

Belongs to the chemokine-like factor family. Highly expressed in testis.

It localises to the membrane. This is CKLF-like MARVEL transmembrane domain-containing protein 2 (CMTM2) from Homo sapiens (Human).